The following is a 270-amino-acid chain: Formamidopyrimidine-DNA glycosylase (270 aa).

Pro2 functions as the Schiff-base intermediate with DNA in the catalytic mechanism. Glu3 (proton donor) is an active-site residue. The active-site Proton donor; for beta-elimination activity is Lys58. His91, Arg109, and Arg151 together coordinate DNA. The FPG-type zinc finger occupies 236–270; that stretch reads QVYGKTGQQCPSCETPLKAVKLAARASVYCPECQS. The active-site Proton donor; for delta-elimination activity is Arg260.

The protein belongs to the FPG family. In terms of assembly, monomer. The cofactor is Zn(2+).

It catalyses the reaction Hydrolysis of DNA containing ring-opened 7-methylguanine residues, releasing 2,6-diamino-4-hydroxy-5-(N-methyl)formamidopyrimidine.. It carries out the reaction 2'-deoxyribonucleotide-(2'-deoxyribose 5'-phosphate)-2'-deoxyribonucleotide-DNA = a 3'-end 2'-deoxyribonucleotide-(2,3-dehydro-2,3-deoxyribose 5'-phosphate)-DNA + a 5'-end 5'-phospho-2'-deoxyribonucleoside-DNA + H(+). Functionally, involved in base excision repair of DNA damaged by oxidation or by mutagenic agents. Acts as a DNA glycosylase that recognizes and removes damaged bases. Has a preference for oxidized purines, such as 7,8-dihydro-8-oxoguanine (8-oxoG). Has AP (apurinic/apyrimidinic) lyase activity and introduces nicks in the DNA strand. Cleaves the DNA backbone by beta-delta elimination to generate a single-strand break at the site of the removed base with both 3'- and 5'-phosphates. The polypeptide is Formamidopyrimidine-DNA glycosylase (Psychromonas ingrahamii (strain DSM 17664 / CCUG 51855 / 37)).